A 182-amino-acid chain; its full sequence is Doublesex- and mab-3-related transcription factor C1 (182 aa).

Threonine 15 carries the post-translational modification Phosphoserine. Over residues 26–39 (AQVDTATQEESSQG) the composition is skewed to polar residues. 2 disordered regions span residues 26-48 (AQVD…QHPE) and 136-174 (QTRH…PSGH).

Belongs to the DMRT family. Expressed in Sertoli cells in male testis.

This Mus musculus (Mouse) protein is Doublesex- and mab-3-related transcription factor C1 (Dmrtc1).